We begin with the raw amino-acid sequence, 104 residues long: Transcription factor S (104 aa).

Zn(2+) contacts are provided by C4, C7, C20, C22, C65, C68, C93, and C96. The C4-type zinc-finger motif lies at 4–22; that stretch reads CPKCGAVMFPSEGKFKCQC. The TFIIS-type zinc finger occupies 61–101; sequence TRVECPKCGNMEAFWWLQQTRRADESETRFFRCTRCKHTWR.

It belongs to the archaeal RpoM/eukaryotic RPA12/RPB9/RPC11 RNA polymerase family.

Its function is as follows. Induces RNA cleavage activity in the RNA polymerase. In its presence, the cleavage activity of the RNA polymerase truncates the RNA back to position +15 in a stepwise manner by releasing mainly dinucleotides from the 3'-end of the nascent RNA. The truncated RNAs are able to continue elongation. Involved in transcriptional proofreading and fidelity. Misincorporation of nucleotides during elongation of transcription leads to arrested elongation complexes which are rescued by TFS-promoted removal of a dinucleotide from the 3'-end. TFS is able to induce a cleavage resynthesis cycle in stalled elongation complexes (resulting from the next missing nucleotide or a reduced incorporation rate of a wrong nucleotide) preventing misincorporation and enabling proofreading in a post-incorporation manner. Pausing of elongation complexes is the main determinant of TFS-induced RNA cleavage. The sequence is that of Transcription factor S from Methanothermobacter thermautotrophicus (strain ATCC 29096 / DSM 1053 / JCM 10044 / NBRC 100330 / Delta H) (Methanobacterium thermoautotrophicum).